The sequence spans 303 residues: Probable cell division protein WhiA (303 aa).

Positions 272-303 (SIQQIADSIEPPLTKSGVNHRLRKINKIADDL) form a DNA-binding region, H-T-H motif.

Belongs to the WhiA family.

In terms of biological role, involved in cell division and chromosome segregation. The chain is Probable cell division protein WhiA from Streptococcus thermophilus (strain ATCC BAA-250 / LMG 18311).